A 180-amino-acid chain; its full sequence is Adenine phosphoribosyltransferase (180 aa).

Belongs to the purine/pyrimidine phosphoribosyltransferase family. Homodimer.

It localises to the cytoplasm. It carries out the reaction AMP + diphosphate = 5-phospho-alpha-D-ribose 1-diphosphate + adenine. Its pathway is purine metabolism; AMP biosynthesis via salvage pathway; AMP from adenine: step 1/1. Functionally, catalyzes a salvage reaction resulting in the formation of AMP, that is energically less costly than de novo synthesis. This Mycolicibacterium paratuberculosis (strain ATCC BAA-968 / K-10) (Mycobacterium paratuberculosis) protein is Adenine phosphoribosyltransferase.